The sequence spans 495 residues: Probable cytochrome P450 4s3 (495 aa).

Heme is bound by residues glutamate 307 and cysteine 436.

Belongs to the cytochrome P450 family. Heme is required as a cofactor.

Its subcellular location is the endoplasmic reticulum membrane. The protein localises to the microsome membrane. May be involved in the metabolism of insect hormones and in the breakdown of synthetic insecticides. In Drosophila melanogaster (Fruit fly), this protein is Probable cytochrome P450 4s3 (Cyp4s3).